Reading from the N-terminus, the 312-residue chain is Cytochrome c biogenesis protein CcsA (312 aa).

Helical transmembrane passes span 12–32, 47–67, 72–92, 98–118, 144–164, 220–240, 254–271, and 281–301; these read NLVF…LSFF, IVAN…AGYF, LYES…YVEF, LVGA…NLTL, MMLS…FLVI, IIGL…VWAN, TWAL…HSRI, and AILG…VNFL.

The protein belongs to the CcmF/CycK/Ccl1/NrfE/CcsA family. May interact with Ccs1.

It is found in the plastid. It localises to the chloroplast thylakoid membrane. Required during biogenesis of c-type cytochromes (cytochrome c6 and cytochrome f) at the step of heme attachment. This Trieres chinensis (Marine centric diatom) protein is Cytochrome c biogenesis protein CcsA.